A 260-amino-acid polypeptide reads, in one-letter code: uncharacterized protein (260 aa).

The signal sequence occupies residues M1 to S22. A lipid anchor (N-palmitoyl cysteine) is attached at C23. Residue C23 is the site of S-diacylglycerol cysteine attachment.

This sequence belongs to the staphylococcal tandem lipoprotein family.

The protein resides in the cell membrane. This is an uncharacterized protein from Staphylococcus aureus (strain N315).